The sequence spans 111 residues: MICOS complex subunit MIC13 (111 aa).

Residues 8–26 traverse the membrane as a helical segment; it reads VVKFATKVTIAGGALYVAY.

This sequence belongs to the MICOS complex subunit Mic13 family. As to quaternary structure, component of the mitochondrial contact site and cristae organizing system (MICOS) complex.

It is found in the mitochondrion inner membrane. Its function is as follows. Component of the MICOS complex, a large protein complex of the mitochondrial inner membrane that plays crucial roles in the maintenance of crista junctions, inner membrane architecture, and formation of contact sites to the outer membrane. Constituent of mature MICOS complex, it is required for the formation of cristae junction (CJ) and maintenance of cristae morphology. Required for the incorporation of MIC10 into the MICOS complex. The chain is MICOS complex subunit MIC13 from Danio rerio (Zebrafish).